Reading from the N-terminus, the 436-residue chain is MAPPKKTVKKMDLTSFLNDDTFGSSWAEEDVDLNKITIPIETANANTIPLSELAHAKNNSNNTRSGGFGGSFGGRSRLDPALGGGSSDRREEYPVPDAPPYRAVINNIPWDITPEGVQAWVEDGLVKPEAVEEVVLPKNLRDPTRLKGNAFVTLKERADLVAVLKFNGTKLNERTVYVSVAAPRRGGGADVDWSSARGSNFQGDGREDAPDLDWGAARGSNFRGPRREREEVDIDWTAARGSNFQGSSRPPRREREEVDIDWSAARGSNFQGSSRPPRREREEPDIDWSAARGSNFQSSSRPPRREREEPDIDWSAARGSNFQSSSRPPRREREKEEPALDWGAARGAQFGKPQQTKNTYKDRSLTNKKTTDEQPKIQKSVYDVLRTEDDDEDEEAEKQNGDAKENKVDAAVEKLQDKTAQLTVEDGDNWEVVGKK.

Residues 56–98 (AKNNSNNTRSGGFGGSFGGRSRLDPALGGGSSDRREEYPVPDA) form a disordered region. S65 and S71 each carry phosphoserine. Residues 101-183 (YRAVINNIPW…RTVYVSVAAP (83 aa)) form the RRM domain. The segment at 185–406 (RGGGADVDWS…EKQNGDAKEN (222 aa)) is disordered. One copy of the 1; approximate repeat lies at 190 to 210 (DVDWSSARGSNFQGDGREDAP). The 7 X approximate tandem repeats stretch occupies residues 190-350 (DVDWSSARGS…DWGAARGAQF (161 aa)). 5 tandem repeats follow at residues 211–232 (DLDW…REEV), 233–258 (DIDW…REEV), 259–284 (DIDW…REEP), 285–310 (DIDW…REEP), and 311–340 (DIDW…EPAL). A compositionally biased stretch (basic and acidic residues) spans 329–338 (PRREREKEEP). One copy of the 7; truncated repeat lies at 341 to 350 (DWGAARGAQF). Composition is skewed to basic and acidic residues over residues 359-376 (TYKD…EQPK) and 397-406 (EKQNGDAKEN).

Involved in translation initiation. May be the homolog of mammalian eIF4B and be part of an RNA helicase. STM1/TIF3 is a non-essential gene. This chain is Eukaryotic translation initiation factor 4B (TIF3), found in Saccharomyces cerevisiae (strain ATCC 204508 / S288c) (Baker's yeast).